The primary structure comprises 68 residues: Protein transport protein Sec61 subunit gamma (68 aa).

At 1-32 (MDQFQALIEPARQFSKDSYRLVKRCTKPDRKE) the chain is on the cytoplasmic side. A helical transmembrane segment spans residues 33–61 (YQKIAMATAIGFAIMGFIGFFVKLIHIPI). The Extracellular segment spans residues 62–68 (NNIIVGA).

This sequence belongs to the SecE/SEC61-gamma family. As to quaternary structure, heterotrimeric complex composed of SEC61-alpha, SEC61-beta and SEC61-gamma. Expressed in the germline. Expression in the germline is regulated in a sex- and meiotic cycle stage-specific manner. Expressed in somatic tissues including the intestine and somatic gonad. Expressed in the intestine more highly in hermaprodites than in males. In hermaphrodites, weakly expressed in the spermatheca.

Its subcellular location is the endoplasmic reticulum membrane. Functionally, required for oocyte development and ovulation. Required for the translocation of secretory and transmembrane proteins into the endoplasmic reticulum in vitro. This is Protein transport protein Sec61 subunit gamma from Caenorhabditis elegans.